A 308-amino-acid polypeptide reads, in one-letter code: Protoheme IX farnesyltransferase (308 aa).

A run of 8 helical transmembrane segments spans residues 31–51 (VIEL…RGTV), 53–73 (PLLI…ANAL), 102–122 (NALV…WWTT), 124–144 (LLSG…YTLL), 149–169 (TSQN…IGWS), 170–190 (AVTG…FFWT), 240–260 (LALA…VWFL), and 288–308 (YLAV…PHLF).

It belongs to the UbiA prenyltransferase family. Protoheme IX farnesyltransferase subfamily.

It is found in the cell membrane. It catalyses the reaction heme b + (2E,6E)-farnesyl diphosphate + H2O = Fe(II)-heme o + diphosphate. The protein operates within porphyrin-containing compound metabolism; heme O biosynthesis; heme O from protoheme: step 1/1. Converts heme B (protoheme IX) to heme O by substitution of the vinyl group on carbon 2 of heme B porphyrin ring with a hydroxyethyl farnesyl side group. The polypeptide is Protoheme IX farnesyltransferase (Mycobacterium avium (strain 104)).